Consider the following 444-residue polypeptide: Glutamate--tRNA ligase 2 (444 aa).

A 'HIGH' region motif is present at residues 7 to 17; that stretch reads PSPTGYLHVGN. Residues 240 to 244 carry the 'KMSKS' region motif; sequence KLSKR. K243 contacts ATP.

It belongs to the class-I aminoacyl-tRNA synthetase family. Glutamate--tRNA ligase type 1 subfamily. In terms of assembly, monomer.

It is found in the cytoplasm. The enzyme catalyses tRNA(Glu) + L-glutamate + ATP = L-glutamyl-tRNA(Glu) + AMP + diphosphate. Functionally, catalyzes the attachment of glutamate to tRNA(Glu) in a two-step reaction: glutamate is first activated by ATP to form Glu-AMP and then transferred to the acceptor end of tRNA(Glu). The protein is Glutamate--tRNA ligase 2 of Gluconobacter oxydans (strain 621H) (Gluconobacter suboxydans).